A 100-amino-acid polypeptide reads, in one-letter code: Large ribosomal subunit protein uL23 (100 aa).

It belongs to the universal ribosomal protein uL23 family. Part of the 50S ribosomal subunit. Contacts protein L29, and trigger factor when it is bound to the ribosome.

One of the early assembly proteins it binds 23S rRNA. One of the proteins that surrounds the polypeptide exit tunnel on the outside of the ribosome. Forms the main docking site for trigger factor binding to the ribosome. This Bradyrhizobium diazoefficiens (strain JCM 10833 / BCRC 13528 / IAM 13628 / NBRC 14792 / USDA 110) protein is Large ribosomal subunit protein uL23.